The chain runs to 233 residues: tRNA (guanine-N(1)-)-methyltransferase (233 aa).

Residues Gly121 and 140–145 (IGDYIL) contribute to the S-adenosyl-L-methionine site.

The protein belongs to the RNA methyltransferase TrmD family. As to quaternary structure, homodimer.

It localises to the cytoplasm. It catalyses the reaction guanosine(37) in tRNA + S-adenosyl-L-methionine = N(1)-methylguanosine(37) in tRNA + S-adenosyl-L-homocysteine + H(+). Its function is as follows. Specifically methylates guanosine-37 in various tRNAs. This is tRNA (guanine-N(1)-)-methyltransferase from Endomicrobium trichonymphae.